A 257-amino-acid polypeptide reads, in one-letter code: Thiazole synthase (257 aa).

Catalysis depends on K96, which acts as the Schiff-base intermediate with DXP. 1-deoxy-D-xylulose 5-phosphate-binding positions include G157, 184–185 (AG), and 206–207 (NT).

The protein belongs to the ThiG family. In terms of assembly, homotetramer. Forms heterodimers with either ThiH or ThiS.

It localises to the cytoplasm. It carries out the reaction [ThiS sulfur-carrier protein]-C-terminal-Gly-aminoethanethioate + 2-iminoacetate + 1-deoxy-D-xylulose 5-phosphate = [ThiS sulfur-carrier protein]-C-terminal Gly-Gly + 2-[(2R,5Z)-2-carboxy-4-methylthiazol-5(2H)-ylidene]ethyl phosphate + 2 H2O + H(+). It participates in cofactor biosynthesis; thiamine diphosphate biosynthesis. In terms of biological role, catalyzes the rearrangement of 1-deoxy-D-xylulose 5-phosphate (DXP) to produce the thiazole phosphate moiety of thiamine. Sulfur is provided by the thiocarboxylate moiety of the carrier protein ThiS. In vitro, sulfur can be provided by H(2)S. In Agrobacterium fabrum (strain C58 / ATCC 33970) (Agrobacterium tumefaciens (strain C58)), this protein is Thiazole synthase.